The sequence spans 447 residues: Multicopper oxidase mco (447 aa).

The segment covering 1–25 (MMNMKEDKKNTMDMKNMKHHDERKK) has biased composition (basic and acidic residues). The segment at 1–28 (MMNMKEDKKNTMDMKNMKHHDERKKLNS) is disordered. Residues histidine 107, histidine 109, histidine 147, histidine 149, histidine 375, histidine 378, histidine 380, histidine 428, cysteine 429, histidine 430, histidine 434, and methionine 439 each coordinate Cu cation.

This sequence belongs to the multicopper oxidase family. It depends on Cu cation as a cofactor.

Its subcellular location is the cytoplasm. May be involved in copper homeostasis and oxidative stress response. This Staphylococcus epidermidis (strain ATCC 12228 / FDA PCI 1200) protein is Multicopper oxidase mco (mco).